The following is a 206-amino-acid chain: VEL1-related protein YOR387C (206 aa).

Positions 1-19 (MSFLNIFTFFSVLVSVATA) are cleaved as a signal peptide. N26, N48, N91, N139, N152, and N183 each carry an N-linked (GlcNAc...) asparagine glycan.

The protein belongs to the VEL1 family. N-glycosylated.

It localises to the cytoplasm. The protein resides in the cytosol. In Saccharomyces cerevisiae (strain ATCC 204508 / S288c) (Baker's yeast), this protein is VEL1-related protein YOR387C.